The following is a 467-amino-acid chain: Mitogen-activated protein kinase kinase kinase 8 (467 aa).

The residue at position 80 (threonine 80) is a Phosphothreonine. Serine 138 and serine 141 each carry phosphoserine. Residues 144–152 and lysine 167 contribute to the ATP site; that span reads VPRGAFGKV. A Protein kinase domain is found at 146–388; sequence RGAFGKVYLA…AADLLKHEAL (243 aa). Aspartate 253 (proton acceptor) is an active-site residue. Threonine 290 bears the Phosphothreonine mark. Phosphoserine occurs at positions 400 and 443.

It belongs to the protein kinase superfamily. STE Ser/Thr protein kinase family. MAP kinase kinase kinase subfamily. As to quaternary structure, forms a ternary complex with NFKB1/p105 and TNIP2. Interacts with NFKB1; the interaction increases the stability of MAP3K8 but inhibits its MEK phosphorylation activity, whereas loss of interaction following LPS stimulation leads to its degradation. Interacts with CD40 and TRAF6; the interaction is required for ERK activation. Interacts with KSR2; the interaction inhibits ERK and NF-kappa-B activation. The cofactor is Mg(2+). In terms of processing, autophosphorylated. As to expression, expressed in spleen, thymus, liver and lung.

The protein resides in the cytoplasm. The enzyme catalyses L-seryl-[protein] + ATP = O-phospho-L-seryl-[protein] + ADP + H(+). The catalysed reaction is L-threonyl-[protein] + ATP = O-phospho-L-threonyl-[protein] + ADP + H(+). Required for lipopolysaccharide (LPS)-induced, TLR4-mediated activation of the MAPK/ERK pathway in macrophages, thus being critical for production of the pro-inflammatory cytokine TNF-alpha (TNF) during immune responses. Involved in the regulation of T-helper cell differentiation and IFNG expression in T-cells. Involved in mediating host resistance to bacterial infection through negative regulation of type I interferon (IFN) production. Transduces CD40 and TNFRSF1A signals that activate ERK in B-cells and macrophages, and thus may play a role in the regulation of immunoglobulin production. May also play a role in the transduction of TNF signals that activate JNK and NF-kappa-B in some cell types. In adipocytes, activates MAPK/ERK pathway in an IKBKB-dependent manner in response to IL1B and TNF, but not insulin, leading to induction of lipolysis. Plays a role in the cell cycle. In Rattus norvegicus (Rat), this protein is Mitogen-activated protein kinase kinase kinase 8 (Map3k8).